Consider the following 323-residue polypeptide: NADH-ubiquinone oxidoreductase chain 1 (323 aa).

9 helical membrane-spanning segments follow: residues 10-30 (LLYI…GLLI), 52-72 (PNVV…KLVL), 84-104 (IIYA…WSVI), 119-139 (VIFI…AGWA), 157-177 (VSYE…AGTV), 189-209 (VWFI…ALAE), 245-265 (YANI…GIVS), 268-288 (ISGA…RATL), and 302-322 (KSLL…VLII).

The protein belongs to the complex I subunit 1 family.

The protein resides in the mitochondrion inner membrane. The catalysed reaction is a ubiquinone + NADH + 5 H(+)(in) = a ubiquinol + NAD(+) + 4 H(+)(out). Functionally, core subunit of the mitochondrial membrane respiratory chain NADH dehydrogenase (Complex I) that is believed to belong to the minimal assembly required for catalysis. Complex I functions in the transfer of electrons from NADH to the respiratory chain. The immediate electron acceptor for the enzyme is believed to be ubiquinone. This Dictyostelium citrinum (Slime mold) protein is NADH-ubiquinone oxidoreductase chain 1 (nad1).